Consider the following 492-residue polypeptide: Probable malate:quinone oxidoreductase (492 aa).

This sequence belongs to the MQO family. FAD serves as cofactor.

It catalyses the reaction (S)-malate + a quinone = a quinol + oxaloacetate. It functions in the pathway carbohydrate metabolism; tricarboxylic acid cycle; oxaloacetate from (S)-malate (quinone route): step 1/1. This is Probable malate:quinone oxidoreductase from Methylobacillus flagellatus (strain ATCC 51484 / DSM 6875 / VKM B-1610 / KT).